Consider the following 345-residue polypeptide: Homeobox protein DBX1 (345 aa).

Disordered regions lie at residues 55–103 and 241–345; these read PRGS…VSPA and KERE…ITVS. Positions 182-241 form a DNA-binding region, homeobox; that stretch reads GMLRRAVFSDVQRKALEKMFQKQKYISKPDRKKLAAKLGLKDSQVKIWFQNRRMKWRNSK. The span at 300 to 309 shows a compositional bias: basic and acidic residues; sequence DPRHLRDPRL. Positions 330-345 are enriched in acidic residues; it reads SDSEDDEEGEEEITVS.

The protein belongs to the H2.0 homeobox family.

It is found in the nucleus. Its function is as follows. Could have a role in patterning the central nervous system during embryogenesis. Has a key role in regulating the distinct phenotypic features that distinguish two major classes of ventral interneurons, V0 and V1 neurons. Regulates the transcription factor profile, neurotransmitter phenotype, intraspinal migratory path and axonal trajectory of V0 neurons, features that differentiate them from an adjacent set of V1 neurons. This is Homeobox protein DBX1 (DBX1) from Bos taurus (Bovine).